Reading from the N-terminus, the 200-residue chain is Thymidine kinase (200 aa).

Residues 9-16 (STMNAGKS) and 88-91 (DEAH) each bind ATP. Glutamate 89 serves as the catalytic Proton acceptor. Zn(2+) contacts are provided by cysteine 146, cysteine 148, cysteine 183, and histidine 186.

It belongs to the thymidine kinase family. Homotetramer.

The protein resides in the cytoplasm. It catalyses the reaction thymidine + ATP = dTMP + ADP + H(+). The sequence is that of Thymidine kinase from Rhizobium etli (strain ATCC 51251 / DSM 11541 / JCM 21823 / NBRC 15573 / CFN 42).